Here is a 425-residue protein sequence, read N- to C-terminus: CinA-like protein (425 aa).

Belongs to the CinA family.

This is CinA-like protein from Desulfovibrio desulfuricans (strain ATCC 27774 / DSM 6949 / MB).